Here is a 506-residue protein sequence, read N- to C-terminus: Protein EFFECTOR OF TRANSCRIPTION 1 (506 aa).

Positions 185 to 225 constitute a GIY-YIG domain; it reads AFQGLYELSHDHGRKDDVLVANLGQPESIRSRLRSYSRSFA. The segment covering 234 to 247 has biased composition (polar residues); it reads LSQTILPTTQNKSD. Residues 234–298 are disordered; the sequence is LSQTILPTTQ…VSEKHDDIVD (65 aa). A compositionally biased stretch (basic and acidic residues) spans 248 to 272; the sequence is NQTEEKKSDSEEEREVSSDAAEKES. A compositionally biased stretch (low complexity) spans 273–288; the sequence is NSLPSILRLSRSRPQP. 2 Cx9Cx9RCx2HK repeats span residues 306–331 and 361–386; these read CGVL…TEHK and CGVI…EDHK. Positions 404–413 are enriched in basic and acidic residues; it reads KAVNEDKSKP. Residues 404-426 are disordered; the sequence is KAVNEDKSKPETSTGMNQEGSGL. Residues 414-423 are compositionally biased toward polar residues; the sequence is ETSTGMNQEG. Cx9Cx9RCx2HK repeat units follow at residues 428–453 and 475–500; these read CEAT…WQHK and CGFK…EEHK.

Expressed in rosette leaves, stipules, stems, flowers, siliques and mature seeds. Expressed in the vascular bundles of xylem in shoot parenchyma cells. Expressed in the remnant cytoplasm of differentiated fiber cells and in protoxylem element of parenchymal cells.

The protein localises to the cytoplasm. The protein resides in the nucleus. In terms of biological role, transcriptional regulator involved in the regulation of cell differentiation in meristems. Binds DNA without sequence preference. The protein is Protein EFFECTOR OF TRANSCRIPTION 1 of Arabidopsis thaliana (Mouse-ear cress).